A 274-amino-acid polypeptide reads, in one-letter code: 2-dehydro-3-deoxyphosphooctonate aldolase (274 aa).

It belongs to the KdsA family.

It is found in the cytoplasm. The catalysed reaction is D-arabinose 5-phosphate + phosphoenolpyruvate + H2O = 3-deoxy-alpha-D-manno-2-octulosonate-8-phosphate + phosphate. The protein operates within carbohydrate biosynthesis; 3-deoxy-D-manno-octulosonate biosynthesis; 3-deoxy-D-manno-octulosonate from D-ribulose 5-phosphate: step 2/3. It participates in bacterial outer membrane biogenesis; lipopolysaccharide biosynthesis. The chain is 2-dehydro-3-deoxyphosphooctonate aldolase from Rickettsia canadensis (strain McKiel).